Here is a 25-residue protein sequence, read N- to C-terminus: Gastrin-releasing peptide (25 aa).

M25 is modified (methionine amide).

The protein belongs to the bombesin/neuromedin-B/ranatensin family.

It localises to the secreted. It is found in the cytoplasmic vesicle. The protein resides in the secretory vesicle lumen. Stimulates the release of gastrin and other gastrointestinal hormones. This chain is Gastrin-releasing peptide (grp), found in Scyliorhinus canicula (Small-spotted catshark).